The primary structure comprises 858 residues: ATP-dependent DNA helicase Q-like SIM (858 aa).

In terms of domain architecture, UBA spans 2-44 (DLSSDQLVMKIVEMGFEKLDALEAVKAVGGKSCDDAVEYILKG). The Helicase ATP-binding domain maps to 177 to 353 (LSTWVAHKDC…LESLHLSKET (177 aa)). 190-197 (AATGSGKS) provides a ligand contact to ATP. Residues 288–291 (DEAH) carry the DEAH box motif. Residues 402–450 (LAVISRESEEQTDFGSHDSENIHETDYDEDEEDQENSLAKKNSSNGKEL) form a disordered region. Residues 416-426 (GSHDSENIHET) show a composition bias toward basic and acidic residues. Acidic residues predominate over residues 427–436 (DYDEDEEDQE). The segment covering 437 to 448 (NSLAKKNSSNGK) has biased composition (polar residues). A Helicase C-terminal domain is found at 491–627 (EKQKDLEGLT…QTEQAYKMLS (137 aa)). The disordered stretch occupies residues 822-858 (RQRLERRERKPRRERKPRKKRTRGRSSTKLHPWRSKE). Residues 830 to 858 (RKPRRERKPRKKRTRGRSSTKLHPWRSKE) show a composition bias toward basic residues.

It belongs to the helicase family. RecQ subfamily. It depends on Mg(2+) as a cofactor. The cofactor is Mn(2+). In terms of tissue distribution, mostly expressed in roots and seedlings, and, to a lower extent, in leaves, shoots, shoot apical mersitem, inflorescences, flowers, siliques and seeds.

It is found in the nucleus. It carries out the reaction Couples ATP hydrolysis with the unwinding of duplex DNA by translocating in the 3'-5' direction.. The catalysed reaction is ATP + H2O = ADP + phosphate + H(+). Its function is as follows. Plant specific, probable 3'-5' DNA helicase that may play a role in the repair of DNA. This is ATP-dependent DNA helicase Q-like SIM (RECQSIM) from Arabidopsis thaliana (Mouse-ear cress).